The chain runs to 917 residues: Translation initiation factor IF-2 (917 aa).

2 disordered regions span residues 1–84 (MSDG…GRAG) and 150–318 (KESE…DRER). A compositionally biased stretch (polar residues) spans 10–27 (DGNNTPSQGGEQTRSSRL). Low complexity-rich tracts occupy residues 69 to 84 (AAGP…GRAG), 154 to 177 (QQAA…AAEA), and 227 to 236 (SRPAAAAPAR). Pro residues predominate over residues 265 to 274 (GAPPAPPRRP). Residues 282–305 (GGSDRRSGRIDVRAAIEGDDDKTR) are compositionally biased toward basic and acidic residues. The tr-type G domain occupies 416–586 (PRAPVVTVMG…LLQSEMLDLK (171 aa)). The G1 stretch occupies residues 425-432 (GHVDHGKT). Residue 425-432 (GHVDHGKT) coordinates GTP. The G2 stretch occupies residues 450–454 (GITQH). The interval 472–475 (DTPG) is G3. Residues 472–476 (DTPGH) and 526–529 (NKID) contribute to the GTP site. The interval 526–529 (NKID) is G4. The segment at 562 to 564 (SAL) is G5.

Belongs to the TRAFAC class translation factor GTPase superfamily. Classic translation factor GTPase family. IF-2 subfamily.

It is found in the cytoplasm. Functionally, one of the essential components for the initiation of protein synthesis. Protects formylmethionyl-tRNA from spontaneous hydrolysis and promotes its binding to the 30S ribosomal subunits. Also involved in the hydrolysis of GTP during the formation of the 70S ribosomal complex. The sequence is that of Translation initiation factor IF-2 from Gluconobacter oxydans (strain 621H) (Gluconobacter suboxydans).